A 209-amino-acid chain; its full sequence is Protein-L-isoaspartate O-methyltransferase (209 aa).

Ser59 is a catalytic residue.

The protein belongs to the methyltransferase superfamily. L-isoaspartyl/D-aspartyl protein methyltransferase family.

Its subcellular location is the cytoplasm. It catalyses the reaction [protein]-L-isoaspartate + S-adenosyl-L-methionine = [protein]-L-isoaspartate alpha-methyl ester + S-adenosyl-L-homocysteine. Its function is as follows. Catalyzes the methyl esterification of L-isoaspartyl residues in peptides and proteins that result from spontaneous decomposition of normal L-aspartyl and L-asparaginyl residues. It plays a role in the repair and/or degradation of damaged proteins. This Helicobacter pylori (strain G27) protein is Protein-L-isoaspartate O-methyltransferase.